We begin with the raw amino-acid sequence, 62 residues long: Guanine nucleotide-binding protein subunit gamma (62 aa).

A Cysteine methyl ester modification is found at C59. C59 carries the S-geranylgeranyl cysteine lipid modification. The propeptide at 60–62 (SVL) is removed in mature form.

Belongs to the G protein gamma family. G proteins are composed of 3 units, alpha, beta and gamma. Interacts with gpb-1 and gpb-2.

It localises to the cell membrane. Guanine nucleotide-binding proteins (G proteins) are involved as a modulator or transducer in various transmembrane signaling systems. The beta and gamma chains are required for the GTPase activity, for replacement of GDP by GTP, and for G protein-effector interaction. The protein is Guanine nucleotide-binding protein subunit gamma (gpc-1) of Caenorhabditis briggsae.